We begin with the raw amino-acid sequence, 220 residues long: Charged multivesicular body protein 4b (220 aa).

Disordered stretches follow at residues 1-22 (MSLFGKMFGSGGKGGKSASPQE) and 180-220 (EIGD…WAAN). Coiled-coil stretches lie at residues 21–88 (QEAI…STIE) and 123–181 (IDKV…LLEI).

This sequence belongs to the SNF7 family. As to quaternary structure, probable core component of the endosomal sorting required for transport complex III (ESCRT-III). ESCRT-III components are thought to multimerize to form a flat lattice on the perimeter membrane of the endosome.

The protein localises to the cytoplasm. Its subcellular location is the cytosol. The protein resides in the late endosome membrane. It localises to the midbody. In terms of biological role, probable core component of the endosomal sorting required for transport complex III (ESCRT-III) which is involved in multivesicular bodies (MVBs) formation and sorting of endosomal cargo proteins into MVBs. MVBs contain intraluminal vesicles (ILVs) that are generated by invagination and scission from the limiting membrane of the endosome and mostly are delivered to lysosomes enabling degradation of membrane proteins, such as stimulated growth factor receptors, lysosomal enzymes and lipids. This Danio rerio (Zebrafish) protein is Charged multivesicular body protein 4b (chmp4b).